The chain runs to 385 residues: UDP-N-acetylglucosamine--N-acetylmuramyl-(pentapeptide) pyrophosphoryl-undecaprenol N-acetylglucosamine transferase (385 aa).

UDP-N-acetyl-alpha-D-glucosamine contacts are provided by residues 11–13, Asn-117, Arg-160, Ser-215, and Gln-317; that span reads TGG.

This sequence belongs to the glycosyltransferase 28 family. MurG subfamily.

It localises to the cell inner membrane. It catalyses the reaction di-trans,octa-cis-undecaprenyl diphospho-N-acetyl-alpha-D-muramoyl-L-alanyl-D-glutamyl-meso-2,6-diaminopimeloyl-D-alanyl-D-alanine + UDP-N-acetyl-alpha-D-glucosamine = di-trans,octa-cis-undecaprenyl diphospho-[N-acetyl-alpha-D-glucosaminyl-(1-&gt;4)]-N-acetyl-alpha-D-muramoyl-L-alanyl-D-glutamyl-meso-2,6-diaminopimeloyl-D-alanyl-D-alanine + UDP + H(+). It functions in the pathway cell wall biogenesis; peptidoglycan biosynthesis. In terms of biological role, cell wall formation. Catalyzes the transfer of a GlcNAc subunit on undecaprenyl-pyrophosphoryl-MurNAc-pentapeptide (lipid intermediate I) to form undecaprenyl-pyrophosphoryl-MurNAc-(pentapeptide)GlcNAc (lipid intermediate II). This Rickettsia typhi (strain ATCC VR-144 / Wilmington) protein is UDP-N-acetylglucosamine--N-acetylmuramyl-(pentapeptide) pyrophosphoryl-undecaprenol N-acetylglucosamine transferase.